A 246-amino-acid chain; its full sequence is E3 ubiquitin-protein ligase MARCHF2 (246 aa).

Residues 56–116 (DTPSDGPFCR…ELCHTEFAVE (61 aa)) form an RING-CH-type zinc finger. Residues 56-116 (DTPSDGPFCR…ELCHTEFAVE (61 aa)) are required for inhibition of HIV-1 virus production and VSV G protein expression. Zn(2+) contacts are provided by Cys64, Cys67, Cys80, Cys82, His90, Cys93, Cys106, and Cys109. Positions 121–246 (PLTEWLKDPG…LKKVAEETPV (126 aa)) are required for interaction with IKBKG. Helical transmembrane passes span 138 to 158 (LCCDMVCFLFITPLAAISGWL) and 175 to 195 (AVGLIALTIALFTIYVLWTLV).

In terms of assembly, interacts with STX6; the interaction promotes MARCHF2-mediated ubiquitination and degradation of CFTR. Interacts with MARCHF3. Interacts with GOPC/CAL; the interaction leads to CFTR ubiquitination and degradation. Interacts with CFTR; the interaction leads to CFTR ubiqtuitination and degradation. Interacts (via PDZ domain) with DLG1 (via PDZ domains); the interaction leads to DLG1 ubiqtuitination and degradation. Interacts with ERGIC3. Interacts with ADRB2. Interacts with IKBKG/NEMO; during the late stages of macrophage viral and bacterial infection; the interaction leads to ubiquitination and degradation of IKBKG/NEMO. Broadly expressed.

The protein resides in the endoplasmic reticulum membrane. The protein localises to the lysosome membrane. Its subcellular location is the endosome membrane. It is found in the golgi apparatus membrane. It localises to the cytoplasm. The protein resides in the cell membrane. It catalyses the reaction S-ubiquitinyl-[E2 ubiquitin-conjugating enzyme]-L-cysteine + [acceptor protein]-L-lysine = [E2 ubiquitin-conjugating enzyme]-L-cysteine + N(6)-ubiquitinyl-[acceptor protein]-L-lysine.. It participates in protein modification; protein ubiquitination. Its function is as follows. E3 ubiquitin-protein ligase that may mediate ubiquitination of TFRC and CD86, and promote their subsequent endocytosis and sorting to lysosomes via multivesicular bodies. E3 ubiquitin ligases accept ubiquitin from an E2 ubiquitin-conjugating enzyme in the form of a thioester and then directly transfer the ubiquitin to targeted substrates. Together with GOPC/CAL mediates the ubiquitination and lysosomal degradation of CFTR. Ubiquitinates and therefore mediates the degradation of DLG1. Regulates the intracellular trafficking and secretion of alpha1-antitrypsin/SERPINA1 and HP/haptoglobin via ubiquitination and degradation of the cargo receptor ERGIC3. Negatively regulates the antiviral and antibacterial immune response by repression of the NF-kB and type 1 IFN signaling pathways, via MARCHF2-mediated K48-linked polyubiquitination of IKBKG/NEMO, resulting in its proteasomal degradation. May be involved in endosomal trafficking through interaction with STX6. Functionally, (Microbial infection) Positively regulates the degradation of Vesicular stomatitis virus (VSV) G protein via the lysosomal degradation pathway. Represses HIV-1 viral production and may inhibit the translocation of HIV-1 env to the cell surface, resulting in decreased viral cell-cell transmission. This chain is E3 ubiquitin-protein ligase MARCHF2, found in Homo sapiens (Human).